The sequence spans 394 residues: Cell adhesion molecule 3 (394 aa).

A signal peptide spans 1-17 (MHHPVILLLCLSSLAGA). Residues 18-326 (ANLPPEDLSQ…PIPSTSSIDH (309 aa)) are Extracellular-facing. The region spanning 22–120 (PEDLSQPVTA…PVRTAKAVVT (99 aa)) is the Ig-like V-type domain. Cystine bridges form between Cys45–Cys105 and Cys147–Cys204. 2 Ig-like C2-type domains span residues 128–223 (PQVS…HKIQ) and 228–306 (PTAK…TFIT). A disordered region spans residues 217-240 (SSSHKIQVQYKPTAKIESRPSMPR). The segment covering 230–240 (AKIESRPSMPR) has biased composition (basic and acidic residues). A disulfide bond links Cys249 and Cys295. Residues 327–347 (AVIGGVVAVIAFLLFCLLIVL) form a helical membrane-spanning segment. Residues 348 to 394 (GRYLIRHKGTYLTHEAKGSDDAPDADTAIINAEGGQGGSDDKKEYFI) lie on the Cytoplasmic side of the membrane. Residues 363 to 394 (AKGSDDAPDADTAIINAEGGQGGSDDKKEYFI) are disordered.

This sequence belongs to the nectin family.

The protein resides in the cell membrane. Its subcellular location is the cell junction. In terms of biological role, may be involved in cell-cell adhesion. The sequence is that of Cell adhesion molecule 3 (cadm3) from Xenopus laevis (African clawed frog).